The primary structure comprises 1400 residues: DNA-directed RNA polymerase subunit beta' (1400 aa).

The Zn(2+) site is built by C71, C73, C86, and C89. Residues D462, D464, and D466 each coordinate Mg(2+). Positions 820, 893, 900, and 903 each coordinate Zn(2+).

This sequence belongs to the RNA polymerase beta' chain family. The RNAP catalytic core consists of 2 alpha, 1 beta, 1 beta' and 1 omega subunit. When a sigma factor is associated with the core the holoenzyme is formed, which can initiate transcription. Mg(2+) is required as a cofactor. Requires Zn(2+) as cofactor.

The catalysed reaction is RNA(n) + a ribonucleoside 5'-triphosphate = RNA(n+1) + diphosphate. In terms of biological role, DNA-dependent RNA polymerase catalyzes the transcription of DNA into RNA using the four ribonucleoside triphosphates as substrates. In Methylobacterium nodulans (strain LMG 21967 / CNCM I-2342 / ORS 2060), this protein is DNA-directed RNA polymerase subunit beta'.